The sequence spans 318 residues: tRNA-cytidine(32) 2-sulfurtransferase (318 aa).

Residues 52–57 (SGGKDS) carry the PP-loop motif motif. [4Fe-4S] cluster is bound by residues C127, C130, and C218.

It belongs to the TtcA family. As to quaternary structure, homodimer. Mg(2+) serves as cofactor. Requires [4Fe-4S] cluster as cofactor.

It localises to the cytoplasm. It carries out the reaction cytidine(32) in tRNA + S-sulfanyl-L-cysteinyl-[cysteine desulfurase] + AH2 + ATP = 2-thiocytidine(32) in tRNA + L-cysteinyl-[cysteine desulfurase] + A + AMP + diphosphate + H(+). It functions in the pathway tRNA modification. Its function is as follows. Catalyzes the ATP-dependent 2-thiolation of cytidine in position 32 of tRNA, to form 2-thiocytidine (s(2)C32). The sulfur atoms are provided by the cysteine/cysteine desulfurase (IscS) system. The chain is tRNA-cytidine(32) 2-sulfurtransferase from Actinobacillus pleuropneumoniae serotype 5b (strain L20).